Reading from the N-terminus, the 481-residue chain is UDP-glucose 6-dehydrogenase 1 (481 aa).

Residues 8–13 (GAGYVG), aspartate 33, arginine 38, 86–90 (VNTPT), 127–128 (ST), and glutamate 161 each bind NAD(+). Residues 157–161 (EFLAE), 216–223 (KLAANAFL), and 256–269 (RIGPKFLNASVGFG) each bind substrate. Cysteine 272 (nucleophile) is an active-site residue. An NAD(+)-binding site is contributed by 272–275 (CFQK). Substrate is bound at residue 334–335 (FK). Arginine 342 lines the NAD(+) pocket. Arginine 448 provides a ligand contact to substrate.

This sequence belongs to the UDP-glucose/GDP-mannose dehydrogenase family.

It catalyses the reaction UDP-alpha-D-glucose + 2 NAD(+) + H2O = UDP-alpha-D-glucuronate + 2 NADH + 3 H(+). Its pathway is nucleotide-sugar biosynthesis; UDP-alpha-D-glucuronate biosynthesis; UDP-alpha-D-glucuronate from UDP-alpha-D-glucose: step 1/1. Its activity is regulated as follows. Inhibited by UDP-xylose. Involved in the biosynthesis of UDP-glucuronic acid (UDP-GlcA), providing nucleotide sugars for cell-wall polymers. The polypeptide is UDP-glucose 6-dehydrogenase 1 (UGD1) (Arabidopsis thaliana (Mouse-ear cress)).